The following is a 262-amino-acid chain: Shikimate dehydrogenase (NADP(+)) (262 aa).

Shikimate-binding positions include 15-17 and T62; that span reads SRS. The Proton acceptor role is filled by K66. E78 provides a ligand contact to NADP(+). Residues N87 and D102 each coordinate shikimate. Residues 126–130, 150–155, and M214 contribute to the NADP(+) site; these read GAGGA and NRTLAR. Shikimate is bound at residue Y216. NADP(+) is bound at residue G236.

It belongs to the shikimate dehydrogenase family. In terms of assembly, homodimer.

It catalyses the reaction shikimate + NADP(+) = 3-dehydroshikimate + NADPH + H(+). The protein operates within metabolic intermediate biosynthesis; chorismate biosynthesis; chorismate from D-erythrose 4-phosphate and phosphoenolpyruvate: step 4/7. Its function is as follows. Involved in the biosynthesis of the chorismate, which leads to the biosynthesis of aromatic amino acids. Catalyzes the reversible NADPH linked reduction of 3-dehydroshikimate (DHSA) to yield shikimate (SA). This is Shikimate dehydrogenase (NADP(+)) from Acinetobacter baumannii (strain ATCC 17978 / DSM 105126 / CIP 53.77 / LMG 1025 / NCDC KC755 / 5377).